Consider the following 415-residue polypeptide: Interleukin-5 receptor subunit alpha (415 aa).

Positions 1–17 (MVPVLLILVGALATLQA) are cleaved as a signal peptide. The Extracellular segment spans residues 18 to 339 (DLLNHKKFLL…KERKSLVEWH (322 aa)). Residues 29–120 (PPVNFTIKAT…VSAELKAPPG (92 aa)) enclose the Fibronectin type-III 1 domain. Residues N32 and N128 are each glycosylated (N-linked (GlcNAc...) asparagine). 2 disulfide bridges follow: C131-C152 and C179-C193. Residues N213 and N241 are each glycosylated (N-linked (GlcNAc...) asparagine). Residues 238-331 (PPRNVTVEIE…WSQPIYVGKE (94 aa)) enclose the Fibronectin type-III 2 domain. Residues C266 and C313 are joined by a disulfide bond. The WSXWS motif motif lies at 319 to 323 (WGEWS). A helical transmembrane segment spans residues 340–361 (LIVLPTAACFVLLIFSLICRVC). The Cytoplasmic segment spans residues 362 to 415 (HLWTRLFPPVPAPKSNIKDLPVVTEYEKPSNETKIEVVHCVEEVGFEVMGNSTF). Residues 367 to 375 (LFPPVPAPK) carry the Box 1 motif motif.

Interacts with IL5. Interacts with CSF2RB. Interacts with JAK2. Interacts with SDCBP. In terms of tissue distribution, expressed on eosinophils and basophils. Also on B-cells.

It is found in the membrane. In terms of biological role, cell surface receptor that plays an important role in the survival, differentiation, and chemotaxis of eosinophils. Acts by forming a heterodimeric receptor with CSF2RB subunit and subsequently binding to interleukin-5. In unstimulated conditions, interacts constitutively with JAK2. Heterodimeric receptor activation leads to JAK2 stimulation and subsequent activation of the JAK-STAT pathway. This chain is Interleukin-5 receptor subunit alpha (Il5ra), found in Mus musculus (Mouse).